The primary structure comprises 242 residues: Methylthioribulose-1-phosphate dehydratase (242 aa).

Position 97 (Cys-97) interacts with substrate. Positions 115 and 117 each coordinate Zn(2+). The Proton donor/acceptor role is filled by Glu-139. A Zn(2+)-binding site is contributed by His-195.

The protein belongs to the aldolase class II family. MtnB subfamily. As to quaternary structure, homotetramer. Interacts with APAF1. May interact with CASP1. The cofactor is Zn(2+).

It is found in the cytoplasm. The catalysed reaction is 5-(methylsulfanyl)-D-ribulose 1-phosphate = 5-methylsulfanyl-2,3-dioxopentyl phosphate + H2O. It functions in the pathway amino-acid biosynthesis; L-methionine biosynthesis via salvage pathway; L-methionine from S-methyl-5-thio-alpha-D-ribose 1-phosphate: step 2/6. Its function is as follows. Catalyzes the dehydration of methylthioribulose-1-phosphate (MTRu-1-P) into 2,3-diketo-5-methylthiopentyl-1-phosphate (DK-MTP-1-P). Functions in the methionine salvage pathway, which plays a key role in cancer, apoptosis, microbial proliferation and inflammation. May inhibit the CASP1-related inflammatory response (pyroptosis), the CASP9-dependent apoptotic pathway and the cytochrome c-dependent and APAF1-mediated cell death. The chain is Methylthioribulose-1-phosphate dehydratase from Bos taurus (Bovine).